Reading from the N-terminus, the 224-residue chain is Ribose-5-phosphate isomerase A (224 aa).

Residues 34 to 37 (TGST), 87 to 90 (DGAD), and 100 to 103 (KGGG) contribute to the substrate site. The active-site Proton acceptor is Glu109. Residue Lys127 participates in substrate binding.

Belongs to the ribose 5-phosphate isomerase family. In terms of assembly, homodimer.

The enzyme catalyses aldehydo-D-ribose 5-phosphate = D-ribulose 5-phosphate. It functions in the pathway carbohydrate degradation; pentose phosphate pathway; D-ribose 5-phosphate from D-ribulose 5-phosphate (non-oxidative stage): step 1/1. In terms of biological role, catalyzes the reversible conversion of ribose-5-phosphate to ribulose 5-phosphate. This chain is Ribose-5-phosphate isomerase A, found in Francisella tularensis subsp. novicida (strain U112).